A 428-amino-acid chain; its full sequence is GTPase Obg (428 aa).

Positions Met1–Leu158 constitute an Obg domain. Residues Ala159–Glu329 enclose the OBG-type G domain. GTP is bound by residues Gly165–Ser172, Phe190–Val194, Asp212–Gly215, Asn282–Asp285, and Ser310–Val312. Mg(2+) is bound by residues Ser172 and Thr192. The region spanning Lys350–Asp428 is the OCT domain.

This sequence belongs to the TRAFAC class OBG-HflX-like GTPase superfamily. OBG GTPase family. Monomer. Mg(2+) is required as a cofactor.

Its subcellular location is the cytoplasm. Its function is as follows. An essential GTPase which binds GTP, GDP and possibly (p)ppGpp with moderate affinity, with high nucleotide exchange rates and a fairly low GTP hydrolysis rate. Plays a role in control of the cell cycle, stress response, ribosome biogenesis and in those bacteria that undergo differentiation, in morphogenesis control. This Anoxybacillus flavithermus (strain DSM 21510 / WK1) protein is GTPase Obg.